The primary structure comprises 482 residues: Putative fatty acid desaturase 2-like protein FADS2B (482 aa).

A disordered region spans residues 1–31 (MKFEEKCGDNGSIVGRNQSYPGEKHQPKGKP). The Cytoplasmic portion of the chain corresponds to 1-167 (MKFEEKCGDN…EAMNMFHANL (167 aa)). Positions 56–132 (LSMYTWLEIQ…LKPLLIGELA (77 aa)) constitute a Cytochrome b5 heme-binding domain. Positions 90 and 113 each coordinate heme. Residues 168 to 188 (GFFFLHFVQILILEVLAWLIV) traverse the membrane as a helical segment. Residues 189–190 (YH) are Lumenal-facing. Residues 191 to 211 (FGSGWPVTMFISFLLTISQAS) traverse the membrane as a helical segment. Residues 212 to 305 (SSFLQHDAGH…YEEQHLYFYK (94 aa)) are Cytoplasmic-facing. Residues 217–221 (HDAGH) carry the Histidine box-1 motif. Positions 254-258 (HFEQH) match the Histidine box-2 motif. Residues 306 to 326 (VWLPLFMPVYLKLPSMQAMYL) form a helical membrane-spanning segment. The Lumenal segment spans residues 327 to 343 (QRYWVCFSLQDITWVSS). Residues 344–364 (FYIYFITFGLYYGIFGTMLLI) traverse the membrane as a helical segment. Over 365–482 (YLVKFLESPW…AALWADAYYE (118 aa)) the chain is Cytoplasmic. Residues 421–425 (QIEHH) carry the Histidine box-3 motif.

Belongs to the fatty acid desaturase type 1 family.

Its subcellular location is the endoplasmic reticulum membrane. The protein operates within lipid metabolism; polyunsaturated fatty acid biosynthesis. The protein is Putative fatty acid desaturase 2-like protein FADS2B of Homo sapiens (Human).